The sequence spans 107 residues: UPF0145 protein ESA_02470 (107 aa).

It belongs to the UPF0145 family.

This Cronobacter sakazakii (strain ATCC BAA-894) (Enterobacter sakazakii) protein is UPF0145 protein ESA_02470.